The following is a 148-amino-acid chain: Large ribosomal subunit protein bL9 (148 aa).

It belongs to the bacterial ribosomal protein bL9 family.

Functionally, binds to the 23S rRNA. The protein is Large ribosomal subunit protein bL9 of Pseudomonas fluorescens (strain SBW25).